The primary structure comprises 241 residues: Ribose-5-phosphate isomerase A (241 aa).

Substrate contacts are provided by residues 28 to 31, 83 to 86, and 96 to 99; these read TGST, DGAD, and KGGG. E105 functions as the Proton acceptor in the catalytic mechanism. K123 is a binding site for substrate.

Belongs to the ribose 5-phosphate isomerase family. In terms of assembly, homodimer.

It catalyses the reaction aldehydo-D-ribose 5-phosphate = D-ribulose 5-phosphate. The protein operates within carbohydrate degradation; pentose phosphate pathway; D-ribose 5-phosphate from D-ribulose 5-phosphate (non-oxidative stage): step 1/1. In terms of biological role, catalyzes the reversible conversion of ribose-5-phosphate to ribulose 5-phosphate. The polypeptide is Ribose-5-phosphate isomerase A (Rhodopseudomonas palustris (strain BisA53)).